Consider the following 320-residue polypeptide: Foldase protein PrsA (320 aa).

The N-terminal stretch at Met-1 to Ala-20 is a signal peptide. Residue Cys-21 is the site of N-palmitoyl cysteine attachment. The S-diacylglycerol cysteine moiety is linked to residue Cys-21. The region spanning Glu-139–Lys-245 is the PpiC domain. The interval Glu-159–Ala-198 is disordered.

This sequence belongs to the PrsA family.

The protein localises to the cell membrane. It catalyses the reaction [protein]-peptidylproline (omega=180) = [protein]-peptidylproline (omega=0). Functionally, plays a major role in protein secretion by helping the post-translocational extracellular folding of several secreted proteins. The protein is Foldase protein PrsA of Staphylococcus aureus (strain Mu3 / ATCC 700698).